Consider the following 947-residue polypeptide: Bifunctional glutamine synthetase adenylyltransferase/adenylyl-removing enzyme (947 aa).

An adenylyl removase region spans residues 1-440; that stretch reads MTPLSSPLSQ…VFNELIGDDE (440 aa). An adenylyl transferase region spans residues 450–947; sequence SEPWRDVWQD…ASWRKWLVAV (498 aa).

The protein belongs to the GlnE family. It depends on Mg(2+) as a cofactor.

The enzyme catalyses [glutamine synthetase]-O(4)-(5'-adenylyl)-L-tyrosine + phosphate = [glutamine synthetase]-L-tyrosine + ADP. The catalysed reaction is [glutamine synthetase]-L-tyrosine + ATP = [glutamine synthetase]-O(4)-(5'-adenylyl)-L-tyrosine + diphosphate. In terms of biological role, involved in the regulation of glutamine synthetase GlnA, a key enzyme in the process to assimilate ammonia. When cellular nitrogen levels are high, the C-terminal adenylyl transferase (AT) inactivates GlnA by covalent transfer of an adenylyl group from ATP to specific tyrosine residue of GlnA, thus reducing its activity. Conversely, when nitrogen levels are low, the N-terminal adenylyl removase (AR) activates GlnA by removing the adenylyl group by phosphorolysis, increasing its activity. The regulatory region of GlnE binds the signal transduction protein PII (GlnB) which indicates the nitrogen status of the cell. This chain is Bifunctional glutamine synthetase adenylyltransferase/adenylyl-removing enzyme, found in Salmonella dublin (strain CT_02021853).